The sequence spans 572 residues: Methionine--tRNA ligase (572 aa).

The 'HIGH' region signature appears at 11–21 (PYINGIKHLGN). Cysteine 143, cysteine 146, cysteine 156, and cysteine 159 together coordinate Zn(2+). The short motif at 346–350 (QFSTS) is the 'KMSKS' region element. Threonine 349 contributes to the ATP binding site.

This sequence belongs to the class-I aminoacyl-tRNA synthetase family. MetG type 1 subfamily. In terms of assembly, monomer. The cofactor is Zn(2+).

Its subcellular location is the cytoplasm. It carries out the reaction tRNA(Met) + L-methionine + ATP = L-methionyl-tRNA(Met) + AMP + diphosphate. Functionally, is required not only for elongation of protein synthesis but also for the initiation of all mRNA translation through initiator tRNA(fMet) aminoacylation. The protein is Methionine--tRNA ligase of Dinoroseobacter shibae (strain DSM 16493 / NCIMB 14021 / DFL 12).